A 155-amino-acid chain; its full sequence is Molybdopterin synthase catalytic subunit (155 aa).

Substrate contacts are provided by residues 39–41, 103–104, Lys119, and 126–128; these read LCR, HR, and KKE.

Belongs to the MoaE family. Heterotetramer of 2 MoaD subunits and 2 MoaE subunits. Also stable as homodimer. The enzyme changes between these two forms during catalysis.

The catalysed reaction is 2 [molybdopterin-synthase sulfur-carrier protein]-C-terminal-Gly-aminoethanethioate + cyclic pyranopterin phosphate + H2O = molybdopterin + 2 [molybdopterin-synthase sulfur-carrier protein]-C-terminal Gly-Gly + 2 H(+). The protein operates within cofactor biosynthesis; molybdopterin biosynthesis. Its function is as follows. Converts molybdopterin precursor Z into molybdopterin. This requires the incorporation of two sulfur atoms into precursor Z to generate a dithiolene group. The sulfur is provided by MoaD. The polypeptide is Molybdopterin synthase catalytic subunit (moaE) (Rhizobium meliloti (strain 1021) (Ensifer meliloti)).